Here is a 382-residue protein sequence, read N- to C-terminus: Dodecanoyl-[acyl-carrier-protein] hydrolase, chloroplastic (382 aa).

Residues 1-83 (MATTSLASAF…FSAAEKQWTN (83 aa)) constitute a chloroplast transit peptide. Active-site residues include Asn-283, His-285, and Cys-320.

Belongs to the acyl-ACP thioesterase family.

It is found in the plastid. The protein resides in the chloroplast. The enzyme catalyses dodecanoyl-[ACP] + H2O = dodecanoate + holo-[ACP] + H(+). In terms of biological role, plays an essential role in chain termination during de novo fatty acid synthesis. High thioesterase activity for myristoyl-ACP. This is Dodecanoyl-[acyl-carrier-protein] hydrolase, chloroplastic from Cinnamomum camphora (Camphor tree).